Consider the following 326-residue polypeptide: Prenyl transferase nodC (326 aa).

Residues Leu8–Trp28 form a helical membrane-spanning segment. His95 contacts isopentenyl diphosphate. Residues Asp102 and Asp106 each contribute to the Mg(2+) site. Position 111 (Arg111) interacts with dimethylallyl diphosphate. Asn139 carries N-linked (GlcNAc...) asparagine glycosylation. Lys195 serves as a coordination point for dimethylallyl diphosphate. The N-linked (GlcNAc...) asparagine glycan is linked to Asn210.

The protein belongs to the FPP/GGPP synthase family.

It localises to the membrane. It participates in secondary metabolite biosynthesis. Functionally, cytochrome P450 monooxygenase; part of the gene cluster that mediates the biosynthesis of the indole diterpenes nodulisporic acids (NA). Nodulisporic acid A (NAA) and its chemically modified derivatives are of particular significance because of their highly potent insecticidal activity against blood-feeding arthropods and lack of observable adverse effects on mammals, in particular the tremogenicity associated with the paspaline-derived IDTs is not observed. The geranylgeranyl diphosphate (GGPP) synthase ggs1, localized outside of the cluster, is proposed to catalyze the first step in nodulisporic acid biosynthesis via conversion of farnesyl pyrophosphate and isopentyl pyrophosphate into geranylgeranyl pyrophosphate (GGPP). Condensation of indole-3-glycerol phosphate with GGPP by the prenyl transferase nodC then forms 3-geranylgeranylindole (3-GGI). Epoxidation by the FAD-dependent monooxygenase nodM leads to a single-epoxidized-GGI that is substrate of the terpene cyclase nodB for cyclization to yield emindole SB. The terminal methyl carbon, C28, of emindole SB is then oxidized by the cytochrome P450 monooxygenase nodW to produce nodulisporic acid F (NAF), the pentacyclic core of NAA. NAF is converted to nodulisporic acid E (NAE) via prenylation. This step is probably performed by one of the indole diterpene prenyltransferases nodD1 or nodD2. Several oxidation steps performed by the FAD-linked oxidoreductase nodO and one of the cytochrome P450 monooxygenase nodR, nodX or nodZ further convert NAE to nodulisporic acid D (NAD). NAD is substrate of cytochrome P450 monooxygenase nodJ to produce the precursor of nodulisporic acid C (NAC), converted to NAC by one of the indole diterpene prenyltransferases nodD1 or nodD2. The FAD-dependent monooxygenase nodY2 then oxidizes NAC to nodulisporic acid B (NAB). Finally NAB is converted to NAA by one of the cytochrome P450 monooxygenases nodR, nodX or nodZ. In Hypoxylon pulicicidum, this protein is Prenyl transferase nodC.